The following is an 87-amino-acid chain: Small ribosomal subunit protein uS17 (87 aa).

The protein belongs to the universal ribosomal protein uS17 family. In terms of assembly, part of the 30S ribosomal subunit.

Its function is as follows. One of the primary rRNA binding proteins, it binds specifically to the 5'-end of 16S ribosomal RNA. The chain is Small ribosomal subunit protein uS17 from Syntrophobacter fumaroxidans (strain DSM 10017 / MPOB).